Here is a 520-residue protein sequence, read N- to C-terminus: Membrane-bound glycerophospholipid O-acyltransferase 2 (520 aa).

6 consecutive transmembrane segments (helical) span residues 22-42, 61-81, 88-108, 184-204, 237-257, and 264-284; these read PIDQVNFVVCQLFALLAAIWF, TLLGLYLALFCFGWYALHFLV, CIMIIIGVENMHNYCFVFALG, FMGILAGPLCSYKDYITFIEG, LLVCGLSLLFHLTICTTLPVE, and FQATASWPTKIIYLYISLLAA. Catalysis depends on residues asparagine 342 and histidine 373. 3 consecutive transmembrane segments (helical) span residues 366-386, 416-436, and 444-464; these read FILSAIWHGVYPGYYLTFLTG, VITWIVTQVAISYTVVPFVLL, and FYSSWYYCLHILGILVLLLLP.

Belongs to the membrane-bound acyltransferase family. As to expression, expressed in neutrophils.

The protein resides in the endoplasmic reticulum membrane. The catalysed reaction is a 1-acyl-sn-glycero-3-phosphocholine + an acyl-CoA = a 1,2-diacyl-sn-glycero-3-phosphocholine + CoA. It carries out the reaction a 1-acyl-sn-glycero-3-phosphoethanolamine + an acyl-CoA = a 1,2-diacyl-sn-glycero-3-phosphoethanolamine + CoA. The enzyme catalyses a 1-acyl-sn-glycero-3-phosphate + an acyl-CoA = a 1,2-diacyl-sn-glycero-3-phosphate + CoA. It catalyses the reaction (9Z)-hexadecenoyl-CoA + 1-hexadecanoyl-sn-glycero-3-phosphocholine = 1-hexadecanoyl-2-(9Z-hexadecenoyl)-sn-glycero-3-phosphocholine + CoA. The catalysed reaction is 1-hexadecanoyl-sn-glycero-3-phosphoethanolamine + (9Z)-octadecenoyl-CoA = 1-hexadecanoyl-2-(9Z-octadecenoyl)-sn-glycero-3-phosphoethanolamine + CoA. It carries out the reaction 1-hexadecanoyl-sn-glycero-3-phosphoethanolamine + (9Z)-hexadecenoyl-CoA = 1-hexadecanoyl-2-(9Z)-hexadecenoyl-sn-glycero-3-phosphoethanolamine + CoA. The enzyme catalyses 1-(9Z-octadecenoyl)-sn-glycero-3-phospho-L-serine + hexadecanoyl-CoA = 1-(9Z)-octadecenoyl-2-hexadecanoyl-sn-glycero-3-phosphoserine + CoA. It catalyses the reaction (9Z,12Z)-octadecadienoyl-CoA + 1-hexadecanoyl-sn-glycero-3-phosphocholine = 1-hexadecanoyl-2-(9Z,12Z-octadecadienoyl)-sn-glycero-3-phosphocholine + CoA. The catalysed reaction is 1-hexadecanoyl-sn-glycero-3-phosphocholine + (9Z)-octadecenoyl-CoA = 1-hexadecanoyl-2-(9Z-octadecenoyl)-sn-glycero-3-phosphocholine + CoA. It carries out the reaction 1-hexadecanoyl-sn-glycero-3-phosphate + (9Z)-hexadecenoyl-CoA = 1-hexadecanoyl-2-[(9Z)-hexadec-9-enoyl]-sn-glycero-3-phosphate + CoA. The enzyme catalyses 1-hexadecanoyl-sn-glycero-3-phosphate + (9Z)-octadecenoyl-CoA = 1-hexadecanoyl-2-(9Z-octadecenoyl)-sn-glycero-3-phosphate + CoA. It catalyses the reaction a 1-O-(1Z-alkenyl)-sn-glycero-3-phosphocholine + (9Z)-octadecenoyl-CoA = 1-O-(1Z)-alkenyl-2-(9Z)-octadecenoyl-sn-glycero-3-phosphocholine + CoA. The catalysed reaction is a 1-O-(1Z-alkenyl)-sn-glycero-3-phosphoethanolamine + (9Z)-octadecenoyl-CoA = 1-O-(1Z)-alkenyl-2-(9Z)-octadecenoyl-sn-glycero-3-phosphoethanolamine + CoA. It carries out the reaction 1-octadecanoyl-sn-glycero-3-phosphoethanolamine + (9Z)-octadecenoyl-CoA = 1-octadecanoyl-2-(9Z-octadecenoyl)-sn-glycero-3-phosphoethanolamine + CoA. The enzyme catalyses 1-octadecanoyl-sn-glycero-3-phosphocholine + (9Z)-octadecenoyl-CoA = 1-octadecanoyl-2-(9Z-octadecenoyl)-sn-glycero-3-phosphocholine + CoA. It catalyses the reaction 1-(9Z-octadecenoyl)-sn-glycero-3-phosphoethanolamine + (9Z)-octadecenoyl-CoA = 1,2-di-(9Z-octadecenoyl)-sn-glycero-3-phosphoethanolamine + CoA. Its pathway is lipid metabolism; phospholipid metabolism. With respect to regulation, partially inhibited by thimerosal. In terms of biological role, acyltransferase which catalyzes the transfer of an acyl group from an acyl-CoA to a lysophospholipid leading to the production of a phospholipid and participates in the reacylation step of the phospholipid remodeling pathway also known as the Lands cycle. Catalyzes preferentially the acylation of lysophosphatidylethanolamine (1-acyl-sn-glycero-3-phosphoethanolamine or LPE) and lysophosphatidic acid (LPA) and to a lesser extend lysophosphatidylcholine (LPC) and lysophosphatidylserine (LPS). Prefers oleoyl-CoA as the acyl donor. May be involved in chondrocyte differentiation. This Homo sapiens (Human) protein is Membrane-bound glycerophospholipid O-acyltransferase 2.